Here is a 384-residue protein sequence, read N- to C-terminus: D-alanine--D-alanine ligase (384 aa).

The ATP-grasp domain maps to 167–374 (KKLFAAEGLP…YPTLLATMVD (208 aa)). Residue 195–250 (CERLSLPVFVKPARGGSSIGISRVSSWGQLPSAIAYARRHDPKVIVEAAVNGRELE) coordinates ATP. Residues D329, E341, and N343 each contribute to the Mg(2+) site.

Belongs to the D-alanine--D-alanine ligase family. Mg(2+) is required as a cofactor. Mn(2+) serves as cofactor.

It localises to the cytoplasm. The enzyme catalyses 2 D-alanine + ATP = D-alanyl-D-alanine + ADP + phosphate + H(+). The protein operates within cell wall biogenesis; peptidoglycan biosynthesis. Functionally, cell wall formation. In Mycobacterium leprae (strain TN), this protein is D-alanine--D-alanine ligase.